A 462-amino-acid chain; its full sequence is Glycine--tRNA ligase (462 aa).

Positions 99 and 174 each coordinate substrate. Residues arginine 206–glutamate 208, phenylalanine 216–phenylalanine 221, glutamate 290–leucine 291, and glycine 334–arginine 337 contribute to the ATP site. Phenylalanine 221–glutamate 225 contacts substrate. Substrate is bound at residue glutamate 330 to glycine 334.

Belongs to the class-II aminoacyl-tRNA synthetase family. Homodimer.

Its subcellular location is the cytoplasm. It carries out the reaction tRNA(Gly) + glycine + ATP = glycyl-tRNA(Gly) + AMP + diphosphate. Functionally, catalyzes the attachment of glycine to tRNA(Gly). The protein is Glycine--tRNA ligase of Macrococcus caseolyticus (strain JCSC5402) (Macrococcoides caseolyticum).